The following is a 279-amino-acid chain: MPPKRNFRKRSFEEEEEDNDVNKAAISEEEEKRRLALEEVKFLQKLRERKLGIPALSSTAQSSIGKVKPVEKTETEGEKEELVLQDTFAQETAVLIEDPNMVKYIEQELAKKRGRNIDDAEEVENELKRVEDELYKIPDHLKVKKRSSEESSTQWTTGIAEVQLPIEYKLKNIEETEAAKKLLQERRLMGRPKSEFSIPSSYSADYFQRGKDYAEKLRREHPELYKDRGGPQADGEAAKPSTSSSTNNNADSGKSRQAATDQIMLERFRKRERNRVMRR.

Disordered stretches follow at residues methionine 1–glutamate 29 and serine 57–lysine 79. A compositionally biased stretch (basic and acidic residues) spans lysine 68 to lysine 79. A coiled-coil region spans residues aspartate 86–leucine 183. Residues leucine 217 to glycine 229 show a composition bias toward basic and acidic residues. The tract at residues leucine 217–arginine 279 is disordered. Residues alanine 250–threonine 260 are compositionally biased toward polar residues. The span at lysine 270–arginine 279 shows a compositional bias: basic residues.

It belongs to the TLS1 family. In terms of assembly, interacts with COP1.

The protein resides in the nucleus. It is found in the nucleus speckle. Functionally, inhibits E3 ubiquitin-protein ligase activity of COP1, a central repressor of seedling photomorphogenesis. Represses COP1-mediated turnover of HY5 in the dark. Required for primary root development under normal light growth conditions. The protein is Protein COP1 SUPPRESSOR 2 of Arabidopsis thaliana (Mouse-ear cress).